A 381-amino-acid chain; its full sequence is Spermidine/putrescine import ATP-binding protein PotA (381 aa).

The ABC transporter domain maps to 22-252 (VELRNVFKFF…PKTSFVADFI (231 aa)). Position 54–61 (54–61 (GPSGCGKT)) interacts with ATP.

It belongs to the ABC transporter superfamily. Spermidine/putrescine importer (TC 3.A.1.11.1) family. The complex is composed of two ATP-binding proteins (PotA), two transmembrane proteins (PotB and PotC) and a solute-binding protein (PotD).

The protein resides in the cell inner membrane. It catalyses the reaction ATP + H2O + polyamine-[polyamine-binding protein]Side 1 = ADP + phosphate + polyamineSide 2 + [polyamine-binding protein]Side 1.. Part of the ABC transporter complex PotABCD involved in spermidine/putrescine import. Responsible for energy coupling to the transport system. This is Spermidine/putrescine import ATP-binding protein PotA from Trichormus variabilis (strain ATCC 29413 / PCC 7937) (Anabaena variabilis).